The following is a 151-amino-acid chain: Ribosome maturation factor RimP (151 aa).

This sequence belongs to the RimP family.

Its subcellular location is the cytoplasm. Required for maturation of 30S ribosomal subunits. The sequence is that of Ribosome maturation factor RimP from Thermoanaerobacter sp. (strain X514).